A 673-amino-acid chain; its full sequence is MAEAPASPAPLSPLEVELDPEFEPQSRPRSCTWPLQRPELQASPAKPSGETAADSMIPEEEDDEDDEDGGGRAGSAMAIGGGGGSGTLGSGLLLEDSARVLAPGGQDPGSGPATAAGGLSGGTQALLQPQQPLPPPQPGAAGGSGQPRKCSSRRNAWGNLSYADLITRAIESSPDKRLTLSQIYEWMVRCVPYFKDKGDSNSSAGWKNSIRHNLSLHSRFMRVQNEGTGKSSWWIINPDGGKSGKAPRRRAVSMDNSNKYTKSRGRAAKKKAALQTAPESADDSPSQLSKWPGSPTSRSSDELDAWTDFRSRTNSNASTVSGRLSPIMASTELDEVQDDDAPLSPMLYSSSASLSPSVSKPCTVELPRLTDMAGTMNLNDGLTENLMDDLLDNITLPPSQPSPTGGLMQRSSSFPYTTKGSGLGSPTSSFNSTVFGPSSLNSLRQSPMQTIQENKPATFSSMSHYGNQTLQDLLTSDSLSHSDVMMTQSDPLMSQASTAVSAQNSRRNVMLRNDPMMSFAAQPNQGSLVNQNLLHHQHQTQGALGGSRALSNSVSNMGLSESSSLGSAKHQQQSPVSQSMQTLSDSLSGSSLYSTSANLPVMGHEKFPSDLDLDMFNGSLECDMESIIRSELMDADGLDFNFDSLISTQNVVGLNVGNFTGAKQASSQSWVPG.

The disordered stretch occupies residues 1–153; that stretch reads MAEAPASPAP…SGQPRKCSSR (153 aa). Phosphoserine; by AMPK is present on Ser-30. Phosphothreonine; by PKB/AKT1 is present on Thr-32. Lys-46 bears the N6-methyllysine mark. Acidic residues predominate over residues 57-68; the sequence is IPEEEDDEDDED. Positions 79 to 89 are enriched in gly residues; it reads IGGGGGSGTLG. The required for mitochondrial import stretch occupies residues 80–108; it reads GGGGGSGTLGSGLLLEDSARVLAPGGQDP. Lys-149 is modified (N6-methyllysine). The fork-head DNA-binding region spans 157 to 251; it reads WGNLSYADLI…KSGKAPRRRA (95 aa). Thr-179 is modified (phosphothreonine; by AMPK). Ser-209 is subject to Phosphoserine; by STK4/MST1. Ser-215 carries the phosphoserine; by MAPKAPK5 modification. Lys-230 bears the N6-methyllysine mark. Residues 231–302 are disordered; the sequence is SSWWIINPDG…GSPTSRSSDE (72 aa). Residue Lys-242 is modified to N6-acetyllysine. The short motif at 242-259 is the Nuclear localization signal element; sequence KSGKAPRRRAVSMDNSNK. Residue Ser-253 is modified to Phosphoserine; by PKB/AKT1 and MAPKAPK5. Residues 261–272 are compositionally biased toward basic residues; that stretch reads TKSRGRAAKKKA. N6-methyllysine occurs at positions 262 and 271. Ser-280 and Ser-284 each carry phosphoserine. The span at 283–298 shows a compositional bias: polar residues; that stretch reads DSPSQLSKWPGSPTSR. An N6-methyllysine modification is found at Lys-290. Ser-294 bears the Phosphoserine mark. Ser-299 is subject to Phosphoserine; by CaMK2A. A mediates interaction with CHUK/IKKA and IKBKB/IKKB region spans residues 300 to 673; the sequence is SDELDAWTDF…QASSQSWVPG (374 aa). Ser-311 is modified (phosphoserine). Ser-315 carries the post-translational modification Phosphoserine; by SGK1. 2 positions are modified to phosphoserine; by AMPK: Ser-399 and Ser-413. Residue Lys-419 is modified to N6-methyllysine. Ser-421 carries the post-translational modification Phosphoserine. A disordered region spans residues 536–587; it reads HQHQTQGALGGSRALSNSVSNMGLSESSSLGSAKHQQQSPVSQSMQTLSDSL. Residues 549 to 582 are compositionally biased toward polar residues; that stretch reads ALSNSVSNMGLSESSSLGSAKHQQQSPVSQSMQT. Position 551 is a phosphoserine; by MAPKAPK5 (Ser-551). Ser-555 bears the Phosphoserine; by AMPK and MAPKAPK5 mark. Residues Ser-588 and Ser-626 each carry the phosphoserine; by AMPK modification. Ser-644 is subject to Phosphoserine; by IKKB.

Upon metabolic stress, forms a complex composed of FOXO3, SIRT3 and mitochondrial RNA polymerase POLRMT; the complex is recruited to mtDNA in a SIRT3-dependent manner. Also forms a complex composed of FOXO3, SIRT3, TFAM and POLRMT. Interacts with SIRT2; the interaction occurs independently of SIRT2 deacetylase activity. Interacts with YWHAB/14-3-3-beta and YWHAZ/14-3-3-zeta, which are required for cytosolic sequestration. Upon oxidative stress, interacts with STK4/MST1, which disrupts interaction with YWHAB/14-3-3-beta and leads to nuclear translocation. Interacts with PIM1. Interacts with DDIT3/CHOP. Interacts (deacetylated form) with SKP2. Interacts with CHUK and IKBKB. Interacts with CAMK2A, CAMK2B and calcineurin A. Interacts with NUPR1; this interaction represses FOXO3 transactivation. In terms of processing, in the presence of survival factors such as IGF1, phosphorylated on Thr-32 and Ser-253 by AKT1/PKB. This phosphorylated form then interacts with 14-3-3 proteins and is retained in the cytoplasm. Survival factor withdrawal induces dephosphorylation and promotes translocation to the nucleus where the dephosphorylated protein induces transcription of target genes and triggers apoptosis. Although AKT1/PKB doesn't appear to phosphorylate Ser-315 directly, it may activate other kinases that trigger phosphorylation at this residue. Phosphorylated by STK4/MST1 on Ser-209 upon oxidative stress, which leads to dissociation from YWHAB/14-3-3-beta and nuclear translocation. Phosphorylated by PIM1. Phosphorylation by AMPK leads to the activation of transcriptional activity without affecting subcellular localization. In response to metabolic stress, phosphorylated by AMPK on Ser-30 which mediates FOXO3 mitochondrial translocation. Phosphorylation by MAPKAPK5 promotes nuclear localization and DNA-binding, leading to induction of miR-34b and miR-34c expression, 2 post-transcriptional regulators of MYC that bind to the 3'UTR of MYC transcript and prevent its translation. Phosphorylated by CHUK/IKKA and IKBKB/IKKB. TNF-induced inactivation of FOXO3 requires its phosphorylation at Ser-644 by IKBKB/IKKB which promotes FOXO3 retention in the cytoplasm, polyubiquitination and ubiquitin-mediated proteasomal degradation. May be dephosphorylated by calcineurin A on Ser-299 which abolishes FOXO3 transcriptional activity. In cancer cells, ERK mediated-phosphorylation of Ser-12 is required for mitochondrial translocation of FOXO3 in response to metabolic stress or chemotherapeutic agents. Phosphorylation at Ser-253 promotes its degradation by the proteasome. Dephosphorylation at Ser-253 by protein phosphatase 2A (PPP2CA) promotes its stabilization; interaction with PPP2CA is enhanced by AMBRA1. Post-translationally, deacetylation by SIRT1 or SIRT2 stimulates interaction of FOXO3 with SKP2 and facilitates SCF(SKP2)-mediated FOXO3 ubiquitination and proteasomal degradation. Deacetylation by SIRT2 stimulates FOXO3-mediated transcriptional activity in response to oxidative stress. Deacetylated by SIRT3. Deacetylation by SIRT3 stimulates FOXO3-mediated mtDNA transcriptional activity in response to metabolic stress. Heavily methylated by SET9 which decreases stability, while moderately increasing transcriptional activity. The main methylation site is Lys-271. Methylation doesn't affect subcellular location. In terms of processing, polyubiquitinated. Ubiquitinated by a SCF complex containing SKP2, leading to proteasomal degradation. Post-translationally, the N-terminus is cleaved following import into the mitochondrion. In terms of tissue distribution, ubiquitous.

The protein localises to the cytoplasm. It is found in the cytosol. The protein resides in the nucleus. Its subcellular location is the mitochondrion matrix. It localises to the mitochondrion outer membrane. Its function is as follows. Transcriptional activator that recognizes and binds to the DNA sequence 5'-[AG]TAAA[TC]A-3' and regulates different processes, such as apoptosis and autophagy. Acts as a positive regulator of autophagy in skeletal muscle: in starved cells, enters the nucleus following dephosphorylation and binds the promoters of autophagy genes, such as GABARAP1L, MAP1LC3B and ATG12, thereby activating their expression, resulting in proteolysis of skeletal muscle proteins. Triggers apoptosis in the absence of survival factors, including neuronal cell death upon oxidative stress. Participates in post-transcriptional regulation of MYC: following phosphorylation by MAPKAPK5, promotes induction of miR-34b and miR-34c expression, 2 post-transcriptional regulators of MYC that bind to the 3'UTR of MYC transcript and prevent its translation. In response to metabolic stress, translocates into the mitochondria where it promotes mtDNA transcription. In response to metabolic stress, translocates into the mitochondria where it promotes mtDNA transcription. Also acts as a key regulator of chondrogenic commitment of skeletal progenitor cells in response to lipid availability: when lipids levels are low, translocates to the nucleus and promotes expression of SOX9, which induces chondrogenic commitment and suppresses fatty acid oxidation. Also acts as a key regulator of regulatory T-cells (Treg) differentiation by activating expression of FOXP3. The protein is Forkhead box protein O3 of Homo sapiens (Human).